The chain runs to 363 residues: NADH-quinone oxidoreductase subunit H (363 aa).

Transmembrane regions (helical) follow at residues Val29–Trp49, Gly62–Phe82, Phe96–Phe116, Val127–Gly147, Ala163–Ala183, Phe202–Val222, Glu238–Leu257, Ile264–Val286, Lys299–Phe319, and Phe339–Ile359.

Belongs to the complex I subunit 1 family. As to quaternary structure, NDH-1 is composed of 14 different subunits. Subunits NuoA, H, J, K, L, M, N constitute the membrane sector of the complex.

It localises to the cell inner membrane. The enzyme catalyses a quinone + NADH + 5 H(+)(in) = a quinol + NAD(+) + 4 H(+)(out). In terms of biological role, NDH-1 shuttles electrons from NADH, via FMN and iron-sulfur (Fe-S) centers, to quinones in the respiratory chain. The immediate electron acceptor for the enzyme in this species is believed to be ubiquinone. Couples the redox reaction to proton translocation (for every two electrons transferred, four hydrogen ions are translocated across the cytoplasmic membrane), and thus conserves the redox energy in a proton gradient. This subunit may bind ubiquinone. This Xanthomonas euvesicatoria pv. vesicatoria (strain 85-10) (Xanthomonas campestris pv. vesicatoria) protein is NADH-quinone oxidoreductase subunit H.